The sequence spans 129 residues: MAREPQRIKRRERKNITSGIAHVNASFNNTMVTITDAQGNAISWSSAGMMGFKGSRKSTPYAAQVAADDAGKKAAEHGVRTLEVEVKGPGSGRESALRALQAVGFTITAIRDVTPIPHNGVRPSKRRRV.

This sequence belongs to the universal ribosomal protein uS11 family. In terms of assembly, part of the 30S ribosomal subunit. Interacts with proteins S7 and S18. Binds to IF-3.

In terms of biological role, located on the platform of the 30S subunit, it bridges several disparate RNA helices of the 16S rRNA. Forms part of the Shine-Dalgarno cleft in the 70S ribosome. The protein is Small ribosomal subunit protein uS11 of Novosphingobium aromaticivorans (strain ATCC 700278 / DSM 12444 / CCUG 56034 / CIP 105152 / NBRC 16084 / F199).